A 593-amino-acid chain; its full sequence is NADH-quinone oxidoreductase subunit C/D (593 aa).

The NADH dehydrogenase I subunit C stretch occupies residues 1-184 (MTADNAIFIP…DPYSLTLAKQ (184 aa)). Positions 208–593 (DYMFLNLGPN…IDFVMADVDR (386 aa)) are NADH dehydrogenase I subunit D.

It in the N-terminal section; belongs to the complex I 30 kDa subunit family. In the C-terminal section; belongs to the complex I 49 kDa subunit family. As to quaternary structure, NDH-1 is composed of 13 different subunits. Subunits NuoB, CD, E, F, and G constitute the peripheral sector of the complex.

It localises to the cell inner membrane. It catalyses the reaction a quinone + NADH + 5 H(+)(in) = a quinol + NAD(+) + 4 H(+)(out). Its function is as follows. NDH-1 shuttles electrons from NADH, via FMN and iron-sulfur (Fe-S) centers, to quinones in the respiratory chain. The immediate electron acceptor for the enzyme in this species is believed to be ubiquinone. Couples the redox reaction to proton translocation (for every two electrons transferred, four hydrogen ions are translocated across the cytoplasmic membrane), and thus conserves the redox energy in a proton gradient. This is NADH-quinone oxidoreductase subunit C/D from Pseudomonas putida (strain GB-1).